A 183-amino-acid polypeptide reads, in one-letter code: ATP synthase subunit b, chloroplastic (183 aa).

A helical membrane pass occupies residues 27 to 49 (LATNPINLSVVLGVLIFFGKGVL).

The protein belongs to the ATPase B chain family. F-type ATPases have 2 components, F(1) - the catalytic core - and F(0) - the membrane proton channel. F(1) has five subunits: alpha(3), beta(3), gamma(1), delta(1), epsilon(1). F(0) has four main subunits: a(1), b(1), b'(1) and c(10-14). The alpha and beta chains form an alternating ring which encloses part of the gamma chain. F(1) is attached to F(0) by a central stalk formed by the gamma and epsilon chains, while a peripheral stalk is formed by the delta, b and b' chains.

The protein localises to the plastid. It is found in the chloroplast thylakoid membrane. Functionally, f(1)F(0) ATP synthase produces ATP from ADP in the presence of a proton or sodium gradient. F-type ATPases consist of two structural domains, F(1) containing the extramembraneous catalytic core and F(0) containing the membrane proton channel, linked together by a central stalk and a peripheral stalk. During catalysis, ATP synthesis in the catalytic domain of F(1) is coupled via a rotary mechanism of the central stalk subunits to proton translocation. Its function is as follows. Component of the F(0) channel, it forms part of the peripheral stalk, linking F(1) to F(0). The polypeptide is ATP synthase subunit b, chloroplastic (Ranunculus macranthus (Large buttercup)).